The primary structure comprises 637 residues: Anthranilate synthase, phenazine specific (637 aa).

Residues 1–434 form an anthranilate synthase component I region; the sequence is MSQAAARLME…QRQQTQSDFS (434 aa). In terms of domain architecture, Glutamine amidotransferase type-1 spans 437–628; sequence QVLIVDAEDT…LRHALIHTPV (192 aa). Residues cysteine 517, histidine 602, and glutamate 604 each act as for GATase activity in the active site.

It carries out the reaction chorismate + L-glutamine = anthranilate + pyruvate + L-glutamate + H(+). Its pathway is antibiotic biosynthesis; phenazine biosynthesis. Involved in the biosynthesis of the antibiotic, phenazine, a nitrogen-containing heterocyclic molecule having important roles in virulence, competition and biological control. This chain is Anthranilate synthase, phenazine specific (phzE), found in Pseudomonas fluorescens.